The following is a 181-amino-acid chain: Ferritin BfrB (181 aa).

A Ferritin-like diiron domain is found at 15-150 (MQEQIHNEFT…TLVRVADRAG (136 aa)). Fe cation is bound by residues glutamate 22, glutamate 55, histidine 58, glutamate 99, and glutamine 132.

This sequence belongs to the ferritin family. Prokaryotic subfamily. In terms of assembly, homooligomer of 24 subunits that are packed together to form an approximately spherical molecule with a central cavity, in which large amounts of iron can be stored.

The catalysed reaction is 4 Fe(2+) + O2 + 4 H(+) = 4 Fe(3+) + 2 H2O. In terms of biological role, iron-storage protein that displays ferroxidase activity, catalyzing the oxidation of Fe(2+) ions into Fe(3+) ions, that can then be deposited as a ferric-oxide mineral core within the central cavity of the protein complex. This Mycobacterium tuberculosis (strain ATCC 35801 / TMC 107 / Erdman) protein is Ferritin BfrB (bfrB).